Reading from the N-terminus, the 389-residue chain is GDSL esterase/lipase At1g28570 (389 aa).

The N-terminal stretch at 1–25 (MATLFMKLVSFFLILSTFCLTTVNS) is a signal peptide. Ser41 (nucleophile) is an active-site residue. Residues Asn137 and Asn319 are each glycosylated (N-linked (GlcNAc...) asparagine). Catalysis depends on residues Asp344 and His347.

This sequence belongs to the 'GDSL' lipolytic enzyme family.

It is found in the secreted. The polypeptide is GDSL esterase/lipase At1g28570 (Arabidopsis thaliana (Mouse-ear cress)).